Here is a 347-residue protein sequence, read N- to C-terminus: Uroporphyrinogen decarboxylase (347 aa).

Substrate is bound by residues 24–28 (RQAGR), F42, D73, Y150, T205, and H320.

It belongs to the uroporphyrinogen decarboxylase family. Homodimer.

It is found in the cytoplasm. It catalyses the reaction uroporphyrinogen III + 4 H(+) = coproporphyrinogen III + 4 CO2. Its pathway is porphyrin-containing compound metabolism; protoporphyrin-IX biosynthesis; coproporphyrinogen-III from 5-aminolevulinate: step 4/4. Its function is as follows. Catalyzes the decarboxylation of four acetate groups of uroporphyrinogen-III to yield coproporphyrinogen-III. In Gloeobacter violaceus (strain ATCC 29082 / PCC 7421), this protein is Uroporphyrinogen decarboxylase.